The primary structure comprises 251 residues: Triosephosphate isomerase (251 aa).

A substrate-binding site is contributed by N9–K11. H95 functions as the Electrophile in the catalytic mechanism. The active-site Proton acceptor is E167. Substrate contacts are provided by residues G173, S212, and G233–G234.

It belongs to the triosephosphate isomerase family. Homodimer.

The protein resides in the cytoplasm. It carries out the reaction D-glyceraldehyde 3-phosphate = dihydroxyacetone phosphate. Its pathway is carbohydrate biosynthesis; gluconeogenesis. The protein operates within carbohydrate degradation; glycolysis; D-glyceraldehyde 3-phosphate from glycerone phosphate: step 1/1. Functionally, involved in the gluconeogenesis. Catalyzes stereospecifically the conversion of dihydroxyacetone phosphate (DHAP) to D-glyceraldehyde-3-phosphate (G3P). The polypeptide is Triosephosphate isomerase (Pseudomonas syringae pv. tomato (strain ATCC BAA-871 / DC3000)).